The following is a 429-amino-acid chain: 3-phosphoshikimate 1-carboxyvinyltransferase (429 aa).

3 residues coordinate 3-phosphoshikimate: lysine 23, serine 24, and arginine 28. Lysine 23 is a phosphoenolpyruvate binding site. Phosphoenolpyruvate is bound by residues glycine 95 and arginine 123. Residues serine 168, glutamine 170, aspartate 316, and lysine 343 each contribute to the 3-phosphoshikimate site. Glutamine 170 is a binding site for phosphoenolpyruvate. Aspartate 316 (proton acceptor) is an active-site residue. Arginine 347 and arginine 389 together coordinate phosphoenolpyruvate.

This sequence belongs to the EPSP synthase family. Monomer.

Its subcellular location is the cytoplasm. The enzyme catalyses 3-phosphoshikimate + phosphoenolpyruvate = 5-O-(1-carboxyvinyl)-3-phosphoshikimate + phosphate. The protein operates within metabolic intermediate biosynthesis; chorismate biosynthesis; chorismate from D-erythrose 4-phosphate and phosphoenolpyruvate: step 6/7. Catalyzes the transfer of the enolpyruvyl moiety of phosphoenolpyruvate (PEP) to the 5-hydroxyl of shikimate-3-phosphate (S3P) to produce enolpyruvyl shikimate-3-phosphate and inorganic phosphate. This Bacillus cereus (strain ZK / E33L) protein is 3-phosphoshikimate 1-carboxyvinyltransferase.